The chain runs to 457 residues: Asparagine--tRNA ligase (457 aa).

Belongs to the class-II aminoacyl-tRNA synthetase family. As to quaternary structure, homodimer.

It localises to the cytoplasm. It carries out the reaction tRNA(Asn) + L-asparagine + ATP = L-asparaginyl-tRNA(Asn) + AMP + diphosphate + H(+). This chain is Asparagine--tRNA ligase, found in Phytoplasma australiense.